A 403-amino-acid polypeptide reads, in one-letter code: uncharacterized protein (403 aa).

The next 2 helical transmembrane spans lie at 29 to 49 (FVIF…CGFL) and 55 to 75 (AFIA…FFGC).

The protein belongs to the chlamydial CPn_0129/CT_036/TC_0306 family.

The protein localises to the cell membrane. This is an uncharacterized protein from Chlamydia trachomatis serovar D (strain ATCC VR-885 / DSM 19411 / UW-3/Cx).